The sequence spans 396 residues: uncharacterized protein (396 aa).

2 helical membrane-spanning segments follow: residues 27-47 and 69-89; these read LLIA…QICL and FIVL…NVTF. Positions 117-122 match the HXXXXD motif motif; sequence HQMYAD. 2 helical membrane-spanning segments follow: residues 123–143 and 372–392; these read WIYL…YIIL and LTPR…VFVM.

The protein belongs to the 1-acyl-sn-glycerol-3-phosphate acyltransferase family.

The protein localises to the membrane. This is an uncharacterized protein from Saccharomyces cerevisiae (strain ATCC 204508 / S288c) (Baker's yeast).